Reading from the N-terminus, the 76-residue chain is uncharacterized protein (76 aa).

This is an uncharacterized protein from Archaeoglobus fulgidus (strain ATCC 49558 / DSM 4304 / JCM 9628 / NBRC 100126 / VC-16).